Consider the following 171-residue polypeptide: Co-chaperone protein HscB (171 aa).

The J domain maps to Asp2–Leu74.

Belongs to the HscB family. In terms of assembly, interacts with HscA and stimulates its ATPase activity. Interacts with IscU.

Co-chaperone involved in the maturation of iron-sulfur cluster-containing proteins. Seems to help targeting proteins to be folded toward HscA. The chain is Co-chaperone protein HscB from Salmonella arizonae (strain ATCC BAA-731 / CDC346-86 / RSK2980).